The following is a 393-amino-acid chain: MQTSHYAAEKDMQDAVPRLTFTLRDEERLMMKIGVFVPIGNNGWLISTHAPQYMPTFELNKAIVQKAEHYHFDFALSMIKLRGFGGKTEFWDHNLESFTLMAGLAAVTSRIQIYATAATLTLPPAIVARMAATIDSISGGRFGVNLVTGWQKPEYEQMGIWPGDDYFSRRYDYLTEYVQVLRDLWGTGKSDFKGDFFTMNDCRVSPQPSVPMKVICAGQSDAGMAFSAQYADFNFCFGKGVNTPTAFAPTAARMKQAAEQTGRDVGSYVLFMVIADETDDAARAKWEHYKAGADEEALSWLTEQSQKDTRSGTDTNVRQMADPTSAVNINMGTLVGSYASVARMLDEVASVPGAEGVLLTFDDFLSGIETFGERIQPLMQCRAHLPVLTQEVA.

Residues 79-80 (IK), Asn145, Glu154, 170-171 (RY), and Ser220 each bind FMN.

It belongs to the NtaA/SnaA/DszA monooxygenase family. RutA subfamily.

The catalysed reaction is uracil + FMNH2 + NADH + O2 = (Z)-3-ureidoacrylate + FMN + NAD(+) + H2O + H(+). It carries out the reaction thymine + FMNH2 + NADH + O2 = (Z)-2-methylureidoacrylate + FMN + NAD(+) + H2O + H(+). Functionally, catalyzes the pyrimidine ring opening between N-3 and C-4 by an unusual flavin hydroperoxide-catalyzed mechanism, adding oxygen atoms in the process to yield ureidoacrylate peracid, that immediately reacts with FMN forming ureidoacrylate and FMN-N(5)-oxide. The FMN-N(5)-oxide reacts spontaneously with NADH to produce FMN. Requires the flavin reductase RutF to regenerate FMN in vivo. The protein is Pyrimidine monooxygenase RutA of Escherichia coli O9:H4 (strain HS).